Reading from the N-terminus, the 161-residue chain is SsrA-binding protein (161 aa).

The segment at 137-161 is disordered; that stretch reads HDKRTDSKEKDWNRDKARIMKSSLR. Positions 139–154 are enriched in basic and acidic residues; sequence KRTDSKEKDWNRDKAR.

It belongs to the SmpB family.

It is found in the cytoplasm. Required for rescue of stalled ribosomes mediated by trans-translation. Binds to transfer-messenger RNA (tmRNA), required for stable association of tmRNA with ribosomes. tmRNA and SmpB together mimic tRNA shape, replacing the anticodon stem-loop with SmpB. tmRNA is encoded by the ssrA gene; the 2 termini fold to resemble tRNA(Ala) and it encodes a 'tag peptide', a short internal open reading frame. During trans-translation Ala-aminoacylated tmRNA acts like a tRNA, entering the A-site of stalled ribosomes, displacing the stalled mRNA. The ribosome then switches to translate the ORF on the tmRNA; the nascent peptide is terminated with the 'tag peptide' encoded by the tmRNA and targeted for degradation. The ribosome is freed to recommence translation, which seems to be the essential function of trans-translation. This chain is SsrA-binding protein, found in Aliivibrio salmonicida (strain LFI1238) (Vibrio salmonicida (strain LFI1238)).